We begin with the raw amino-acid sequence, 1053 residues long: DIS3-like exonuclease 1 (1053 aa).

Residues Ala-236 to Ala-310 form the CSD1 domain. The tract at residues Gly-306–Gly-332 is disordered. The CSD2 domain maps to Ile-365–Asn-431. Positions Arg-465–Ser-816 constitute an RNB domain. Ser-989 bears the Phosphoserine mark.

Belongs to the RNR ribonuclease family. As to quaternary structure, component of the RNA exosome complex. The catalytically inactive RNA exosome core (Exo-9) complex is believed to associate with catalytic subunits EXOSC10, and DIS3 or DIS3L in cytoplasmic- and nuclear-specific RNA exosome complex forms. Mg(2+) serves as cofactor.

Its subcellular location is the cytoplasm. The catalysed reaction is Exonucleolytic cleavage in the 3'- to 5'-direction to yield nucleoside 5'-phosphates.. In terms of biological role, catalytic component of the RNA exosome complex which has 3'-&gt;5' exoribonuclease activity and participates in a multitude of cellular RNA processing and degradation events. In the cytoplasm, the RNA exosome complex is involved in general mRNA turnover and specifically degrades inherently unstable mRNAs containing AU-rich elements (AREs) within their 3' untranslated regions, and in RNA surveillance pathways, preventing translation of aberrant mRNAs. It seems to be involved in degradation of histone mRNA. In Mus musculus (Mouse), this protein is DIS3-like exonuclease 1 (Dis3l).